The following is a 290-amino-acid chain: Shikimate dehydrogenase (NADP(+)) (290 aa).

Residues 20–22 (SLS) and threonine 67 each bind shikimate. Catalysis depends on lysine 71, which acts as the Proton acceptor. Positions 92 and 107 each coordinate shikimate. Residues 132–136 (GAGGA) and methionine 228 each bind NADP(+). Tyrosine 230 lines the shikimate pocket. Glycine 251 is a binding site for NADP(+).

This sequence belongs to the shikimate dehydrogenase family. Homodimer.

The enzyme catalyses shikimate + NADP(+) = 3-dehydroshikimate + NADPH + H(+). Its pathway is metabolic intermediate biosynthesis; chorismate biosynthesis; chorismate from D-erythrose 4-phosphate and phosphoenolpyruvate: step 4/7. Its function is as follows. Involved in the biosynthesis of the chorismate, which leads to the biosynthesis of aromatic amino acids. Catalyzes the reversible NADPH linked reduction of 3-dehydroshikimate (DHSA) to yield shikimate (SA). In Citrifermentans bemidjiense (strain ATCC BAA-1014 / DSM 16622 / JCM 12645 / Bem) (Geobacter bemidjiensis), this protein is Shikimate dehydrogenase (NADP(+)).